The chain runs to 361 residues: Mannose-1-phosphate guanyltransferase (361 aa).

Belongs to the transferase hexapeptide repeat family.

Its subcellular location is the cytoplasm. It catalyses the reaction alpha-D-mannose 1-phosphate + GTP + H(+) = GDP-alpha-D-mannose + diphosphate. It functions in the pathway nucleotide-sugar biosynthesis; GDP-alpha-D-mannose biosynthesis; GDP-alpha-D-mannose from alpha-D-mannose 1-phosphate (GTP route): step 1/1. Functionally, involved in cell wall synthesis where it is required for glycosylation. Involved in cell cycle progression through cell-size checkpoint. This chain is Mannose-1-phosphate guanyltransferase (MPG1), found in Eremothecium gossypii (strain ATCC 10895 / CBS 109.51 / FGSC 9923 / NRRL Y-1056) (Yeast).